A 331-amino-acid polypeptide reads, in one-letter code: Biotin synthase (331 aa).

The Radical SAM core domain occupies Pro-52 to Arg-277. 3 residues coordinate [4Fe-4S] cluster: Cys-67, Cys-71, and Cys-74. Residues Cys-110, Cys-202, and Arg-272 each coordinate [2Fe-2S] cluster.

Belongs to the radical SAM superfamily. Biotin synthase family. Homodimer. [4Fe-4S] cluster is required as a cofactor. [2Fe-2S] cluster serves as cofactor.

The enzyme catalyses (4R,5S)-dethiobiotin + (sulfur carrier)-SH + 2 reduced [2Fe-2S]-[ferredoxin] + 2 S-adenosyl-L-methionine = (sulfur carrier)-H + biotin + 2 5'-deoxyadenosine + 2 L-methionine + 2 oxidized [2Fe-2S]-[ferredoxin]. It participates in cofactor biosynthesis; biotin biosynthesis; biotin from 7,8-diaminononanoate: step 2/2. Its function is as follows. Catalyzes the conversion of dethiobiotin (DTB) to biotin by the insertion of a sulfur atom into dethiobiotin via a radical-based mechanism. This chain is Biotin synthase, found in Salinispora tropica (strain ATCC BAA-916 / DSM 44818 / JCM 13857 / NBRC 105044 / CNB-440).